The sequence spans 212 residues: Adenylate kinase (212 aa).

Position 10 to 15 (10 to 15 (GAGKGT)) interacts with ATP. The segment at 30 to 59 (STGDILREAMAQETELGQKAKSYIDAGELV) is NMP. Residues Thr-31, Arg-36, 57 to 59 (ELV), 84 to 87 (GYPR), and Gln-91 each bind AMP. The segment at 125 to 158 (RRRVHEETGETYHLDHDPPPEDVDPDLIVQRSDD) is LID. ATP is bound by residues Arg-126 and 135 to 136 (TY). Residues Arg-155 and Arg-166 each coordinate AMP. Gly-194 is a binding site for ATP.

Belongs to the adenylate kinase family. In terms of assembly, monomer.

It localises to the cytoplasm. It carries out the reaction AMP + ATP = 2 ADP. It functions in the pathway purine metabolism; AMP biosynthesis via salvage pathway; AMP from ADP: step 1/1. Its function is as follows. Catalyzes the reversible transfer of the terminal phosphate group between ATP and AMP. Plays an important role in cellular energy homeostasis and in adenine nucleotide metabolism. The chain is Adenylate kinase from Salinibacter ruber (strain DSM 13855 / M31).